The sequence spans 827 residues: Sporozoite surface protein 2 (827 aa).

The N-terminal stretch at 1 to 22 is a signal peptide; sequence MKLLGNSKYIFVVLLLCISVFL. Positions 43–228 constitute a VWFA domain; it reads DIHILLDGSG…NMIKPFLTKV (186 aa). Residues 235–281 enclose the TSP type-1 domain; sequence IAHCGKWEEWSECSTTCDEGRKIRRRQILHPGCVSEMTTPCKVRDCP. Intrachain disulfides connect C238–C267, C247–C275, and C251–C280. Residues 278-761 form a disordered region; that stretch reads RDCPQIPIPP…NKNQSKSNNG (484 aa). Low complexity predominate over residues 301–388; the sequence is EEPVNPNDPN…NNPNDPSNPN (88 aa). The tract at residues 306-392 is 29 X 3 AA tandem repeats; it reads PNDPNDPNNP…DPSNPNNPNP (87 aa). Over residues 392–407 the composition is skewed to basic residues; that stretch reads PKKRNPKRRNPNKPKP. A 20 tandem tetra-/hexapeptide repeats region spans residues 402–514; the sequence is PNKPKPNKPN…EPSNPNEPSN (113 aa). Residues 408 to 464 show a composition bias toward pro residues; that stretch reads NKPNPNKPNPNEPSNPNKPNPNEPSNPNKPNPNEPSNPNKPNPNEPSNPNKPNPNEP. Low complexity predominate over residues 465–567; sequence LNPNEPSNPN…KEPSNPNEPS (103 aa). 2 repeat units span residues 603-613 and 614-624. A 2 X 11 AA tandem repeats region spans residues 603–624; that stretch reads PEESNPKEPINPEESNPKEPIN. Residues 657-671 are compositionally biased toward polar residues; the sequence is KGNNIPSNLPENPSD. Over residues 709 to 724 the composition is skewed to basic and acidic residues; that stretch reads YKGHEERIPKPHRSND. The helical transmembrane segment at 764–787 threads the bilayer; the sequence is IAGGIIGGLAILGCAGVGYNFIAG.

The protein localises to the cell membrane. This is Sporozoite surface protein 2 (SSP2) from Plasmodium yoelii yoelii.